Reading from the N-terminus, the 72-residue chain is MSSTQDEAILRNARETIDSLYDLSQLLQTGLDKSTLSICVGMIEQGANPDTLAAVIKELRSENEALNSQSNA.

Belongs to the MOZART1 family. In terms of assembly, part of the gamma-tubulin complex.

It localises to the cytoplasm. It is found in the cytoskeleton. The protein localises to the microtubule organizing center. Its subcellular location is the spindle pole body. In terms of biological role, required for gamma-tubulin complex recruitment to the microtubule organizing center (MTOC). The protein is Mitotic-spindle organizing protein 1 of Cryptococcus neoformans var. neoformans serotype D (strain B-3501A) (Filobasidiella neoformans).